The primary structure comprises 466 residues: Argininosuccinate lyase (466 aa).

It belongs to the lyase 1 family. Argininosuccinate lyase subfamily.

The protein resides in the cytoplasm. It carries out the reaction 2-(N(omega)-L-arginino)succinate = fumarate + L-arginine. The protein operates within amino-acid biosynthesis; L-arginine biosynthesis; L-arginine from L-ornithine and carbamoyl phosphate: step 3/3. This Methylocella silvestris (strain DSM 15510 / CIP 108128 / LMG 27833 / NCIMB 13906 / BL2) protein is Argininosuccinate lyase.